We begin with the raw amino-acid sequence, 322 residues long: Probable transcription factor KAN3 (322 aa).

Residues 1–35 (MELFPSQPDLYLKISRRREEEQEKESQELQEQEVE) are disordered. Over residues 17-35 (RREEEQEKESQELQEQEVE) the composition is skewed to basic and acidic residues. Residues 161–221 (GVRAPRMRWT…HLQMYRTIKS (61 aa)) form the HTH myb-type domain. Residues 192–217 (PKSVLELMDVQDLTLAHVKSHLQMYR) constitute a DNA-binding region (H-T-H motif). Disordered regions lie at residues 222-244 (TEKP…NSER) and 267-322 (KASS…NLSP). Polar residues-rich tracts occupy residues 224 to 241 (KPTT…SQVN) and 299 to 322 (LTGT…NLSP).

Expressed in developing phloem.

It localises to the nucleus. Its function is as follows. Probable transcription factor that regulates lateral organ polarity. Plays a role in lateral root formation and development. In Arabidopsis thaliana (Mouse-ear cress), this protein is Probable transcription factor KAN3 (KAN3).